The chain runs to 292 residues: MSAFASENLTSALLVVGTAIFAVLVGAKFLGGSGKPRKVLNPTEFQNFVLKEKNEISHNVAIYRFALPRPTDILGLPIGQHISLAATIEGQPKEVVRSYTPISSDNEAGYFDLLVKAYPQGNISKYLTTLKIGDNMKVRGPKGAMVYTPNMCRHIGMIAGGTGITPMLQIIKAIIRNRPRNGGNDTTQVDLIFANVNPEDILLKEELEQLVKEDDGFRVYYVLNNPPEGWTGGVGFVTPDMIKERLPAPAQDIKIMLCGPPPMISAMKKATESLGYTKARPVSKLEDQVFCF.

A helical transmembrane segment spans residues 12–32 (ALLVVGTAIFAVLVGAKFLGG). Positions 43–148 (TEFQNFVLKE…RGPKGAMVYT (106 aa)) constitute an FAD-binding FR-type domain. FAD contacts are provided by residues 128-143 (TTLK…GPKG) and 154-191 (HIGM…QVDL).

This sequence belongs to the flavoprotein pyridine nucleotide cytochrome reductase family. In terms of assembly, monomer. Component of the 2-(3-amino-3-carboxypropyl)histidine synthase complex composed of dph1, dph2, dph3 and a NADH-dependent reductase, predominantly cbr1. FAD serves as cofactor.

The protein localises to the mitochondrion outer membrane. It catalyses the reaction 2 Fe(III)-[cytochrome b5] + NADH = 2 Fe(II)-[cytochrome b5] + NAD(+) + H(+). The enzyme catalyses 2 Fe(3+)-[Dph3] + NADH = 2 Fe(2+)-[Dph3] + NAD(+) + H(+). The protein operates within protein modification; peptidyl-diphthamide biosynthesis. Functionally, NADH-dependent reductase for dph3 and cytochrome b5. Required for the first step of diphthamide biosynthesis, a post-translational modification of histidine which occurs in elongation factor 2. Dph1 and dph2 transfer a 3-amino-3-carboxypropyl (ACP) group from S-adenosyl-L-methionine (SAM) to a histidine residue, the reaction is assisted by a reduction system comprising dph3 and a NADH-dependent reductase, predominantly cbr1. By reducing dph3, also involved in the formation of the tRNA wobble base modification mcm5s 2U (5-methoxycarbonylmethyl-2-thiouridine), mediated by the elongator complex. The cytochrome b5/NADH cytochrome b5 reductase electron transfer system supports the catalytic activity of several sterol biosynthetic enzymes. The protein is NADH-cytochrome b5 reductase 1 (cbr1) of Aspergillus oryzae (strain ATCC 42149 / RIB 40) (Yellow koji mold).